Reading from the N-terminus, the 698-residue chain is Methionine--tRNA ligase (698 aa).

The 'HIGH' region motif lies at 21 to 31; sequence PYANGPLHFGH. Cys153, Cys156, Cys166, and Cys169 together coordinate Zn(2+). The 'KMSKS' region signature appears at 341-345; that stretch reads QFSKS. Lys344 is a binding site for ATP. One can recognise a tRNA-binding domain in the interval 599-698; the sequence is DFRKLDLRVG…EDVAPGSLVS (100 aa).

The protein belongs to the class-I aminoacyl-tRNA synthetase family. MetG type 1 subfamily. In terms of assembly, homodimer. The cofactor is Zn(2+).

The protein resides in the cytoplasm. It catalyses the reaction tRNA(Met) + L-methionine + ATP = L-methionyl-tRNA(Met) + AMP + diphosphate. Its function is as follows. Is required not only for elongation of protein synthesis but also for the initiation of all mRNA translation through initiator tRNA(fMet) aminoacylation. The polypeptide is Methionine--tRNA ligase (Protochlamydia amoebophila (strain UWE25)).